The chain runs to 585 residues: Glutamate decarboxylase (585 aa).

A compositionally biased stretch (polar residues) spans 35 to 56; the sequence is KSAVQSGHQGSNNMRDTSSQGM. The tract at residues 35-60 is disordered; that stretch reads KSAVQSGHQGSNNMRDTSSQGMANKY. Lys318 carries the post-translational modification N6-(pyridoxal phosphate)lysine.

This sequence belongs to the group II decarboxylase family. Pyridoxal 5'-phosphate serves as cofactor.

It carries out the reaction L-glutamate + H(+) = 4-aminobutanoate + CO2. The chain is Glutamate decarboxylase (GAD1) from Saccharomyces cerevisiae (strain ATCC 204508 / S288c) (Baker's yeast).